The following is a 133-amino-acid chain: DUF35 domain-containing scaffold protein (133 aa).

Zn(2+) contacts are provided by cysteine 23, cysteine 26, cysteine 37, and cysteine 40.

This sequence belongs to the scaffold protein DUF35 family. In terms of assembly, interacts with acetoacetyl-CoA thiolase and HMG-CoA synthase (HMGCS) that catalyzes the first and second step in the mevalonate pathway, respectively.

Functionally, functions as a scaffold to connect the acetoacetyl-CoA thiolase and HMG-CoA synthase (HMGCS) dimers in the channeling thiolase/HMGCS complex, which allows for efficient coupling of the endergonic thiolase reaction with the exergonic HMGCS reaction. The chain is DUF35 domain-containing scaffold protein from Methanothermobacter thermautotrophicus (strain ATCC 29096 / DSM 1053 / JCM 10044 / NBRC 100330 / Delta H) (Methanobacterium thermoautotrophicum).